The following is an 87-amino-acid chain: DNA-directed RNA polymerase subunit omega (87 aa).

Belongs to the RNA polymerase subunit omega family. The RNAP catalytic core consists of 2 alpha, 1 beta, 1 beta' and 1 omega subunit. When a sigma factor is associated with the core the holoenzyme is formed, which can initiate transcription.

The enzyme catalyses RNA(n) + a ribonucleoside 5'-triphosphate = RNA(n+1) + diphosphate. Its function is as follows. Promotes RNA polymerase assembly. Latches the N- and C-terminal regions of the beta' subunit thereby facilitating its interaction with the beta and alpha subunits. In Pseudomonas putida (strain W619), this protein is DNA-directed RNA polymerase subunit omega.